The following is a 620-amino-acid chain: Chaperone protein DnaK (620 aa).

Residues 579-620 (KAQKEASAGAEASEDASGPSSTGSASDDDVVDADYEVVDEDK) form a disordered region. The segment covering 583–603 (EASAGAEASEDASGPSSTGSA) has biased composition (low complexity). Positions 604-620 (SDDDVVDADYEVVDEDK) are enriched in acidic residues.

Belongs to the heat shock protein 70 family.

In terms of biological role, acts as a chaperone. This is Chaperone protein DnaK from Methanococcoides burtonii (strain DSM 6242 / NBRC 107633 / OCM 468 / ACE-M).